The chain runs to 148 residues: UPF0756 membrane protein YeaL (148 aa).

The next 4 membrane-spanning stretches (helical) occupy residues 14-34 (ALGFISHNTTVAVSILVLIIV), 51-71 (LSIGIIILTIGVMAPIASGTL), 86-106 (LVAIAVGVIVSWLGGRGVTLM), and 112-132 (LVAGLLVGTVLGVALFRGVPV).

It belongs to the UPF0756 family.

Its subcellular location is the cell membrane. The protein is UPF0756 membrane protein YeaL of Escherichia coli O157:H7.